The primary structure comprises 329 residues: Phosphate acyltransferase (329 aa).

The protein belongs to the PlsX family. As to quaternary structure, homodimer. Probably interacts with PlsY.

The protein localises to the cytoplasm. The enzyme catalyses a fatty acyl-[ACP] + phosphate = an acyl phosphate + holo-[ACP]. It participates in lipid metabolism; phospholipid metabolism. Its function is as follows. Catalyzes the reversible formation of acyl-phosphate (acyl-PO(4)) from acyl-[acyl-carrier-protein] (acyl-ACP). This enzyme utilizes acyl-ACP as fatty acyl donor, but not acyl-CoA. This chain is Phosphate acyltransferase, found in Campylobacter concisus (strain 13826).